A 146-amino-acid polypeptide reads, in one-letter code: MSMSTSTEVVAHHWAFAIFLIVAIGLCCLMLIGGWFLGGRARARHKNTPFESGIDSVGTARLRLSAKFYLVAMFFVIFDVEALYLFAWSTSIRESGWVGFVEAAIFILVLLAGLVYLVRIGALDWTPTRSRRELVNPENSNSNRQQ.

3 helical membrane-spanning segments follow: residues 16-36 (FAIF…GGWF), 68-88 (FYLV…LFAW), and 98-118 (VGFV…VYLV).

The protein belongs to the complex I subunit 3 family. As to quaternary structure, NDH-1 is composed of 13 different subunits. Subunits NuoA, H, J, K, L, M, N constitute the membrane sector of the complex.

Its subcellular location is the cell inner membrane. The enzyme catalyses a quinone + NADH + 5 H(+)(in) = a quinol + NAD(+) + 4 H(+)(out). Its function is as follows. NDH-1 shuttles electrons from NADH, via FMN and iron-sulfur (Fe-S) centers, to quinones in the respiratory chain. The immediate electron acceptor for the enzyme in this species is believed to be ubiquinone. Couples the redox reaction to proton translocation (for every two electrons transferred, four hydrogen ions are translocated across the cytoplasmic membrane), and thus conserves the redox energy in a proton gradient. In Enterobacter sp. (strain 638), this protein is NADH-quinone oxidoreductase subunit A.